Consider the following 285-residue polypeptide: Dermonecrotic toxin LlSicTox-alphaIII1ii (285 aa).

Residue H12 is part of the active site. E32 and D34 together coordinate Mg(2+). H47 serves as the catalytic Nucleophile. Residues C51 and C57 are joined by a disulfide bond. D91 is a Mg(2+) binding site.

Belongs to the arthropod phospholipase D family. Class I subfamily. Mg(2+) is required as a cofactor. In terms of tissue distribution, expressed by the venom gland.

Its subcellular location is the secreted. The enzyme catalyses an N-(acyl)-sphingosylphosphocholine = an N-(acyl)-sphingosyl-1,3-cyclic phosphate + choline. It catalyses the reaction an N-(acyl)-sphingosylphosphoethanolamine = an N-(acyl)-sphingosyl-1,3-cyclic phosphate + ethanolamine. It carries out the reaction a 1-acyl-sn-glycero-3-phosphocholine = a 1-acyl-sn-glycero-2,3-cyclic phosphate + choline. The catalysed reaction is a 1-acyl-sn-glycero-3-phosphoethanolamine = a 1-acyl-sn-glycero-2,3-cyclic phosphate + ethanolamine. Its function is as follows. Dermonecrotic toxins cleave the phosphodiester linkage between the phosphate and headgroup of certain phospholipids (sphingolipid and lysolipid substrates), forming an alcohol (often choline) and a cyclic phosphate. This toxin acts on sphingomyelin (SM) with high activity (56.8 U/mg). It may also act on ceramide phosphoethanolamine (CPE), lysophosphatidylcholine (LPC) and lysophosphatidylethanolamine (LPE), but not on lysophosphatidylserine (LPS), and lysophosphatidylglycerol (LPG). It acts by transphosphatidylation, releasing exclusively cyclic phosphate products as second products. Induces dermonecrosis, hemolysis, increased vascular permeability, edema, inflammatory response, and platelet aggregation. Is lethal to mice. This chain is Dermonecrotic toxin LlSicTox-alphaIII1ii, found in Loxosceles laeta (South American recluse spider).